A 241-amino-acid chain; its full sequence is Anthocyanidin 3-O-glucosyltransferase 4 (241 aa).

6 residues coordinate UDP-alpha-D-glucose: glutamine 104, histidine 119, tryptophan 122, asparagine 123, serine 124, and glutamate 127. Alanine 142 contacts an anthocyanidin. UDP-alpha-D-glucose-binding residues include glutamate 143 and glutamine 144.

It belongs to the UDP-glycosyltransferase family. In terms of tissue distribution, faintly expressed in cotyledons, roots and leaves.

The catalysed reaction is an anthocyanidin + UDP-alpha-D-glucose + H(+) = an anthocyanidin 3-O-beta-D-glucoside + UDP. Its pathway is pigment biosynthesis; anthocyanin biosynthesis. In the presence of other necessary color factors, this glycosylation reaction allows the accumulation of anthocyanin pigments. This is Anthocyanidin 3-O-glucosyltransferase 4 (GT4) from Manihot esculenta (Cassava).